The chain runs to 72 residues: UPF0154 protein BLi02038/BL02936 (72 aa).

The chain crosses the membrane as a helical span at residues 4–24 (WVVILVGVLALLAGVALGFFI).

The protein belongs to the UPF0154 family.

It localises to the cell membrane. The protein is UPF0154 protein BLi02038/BL02936 of Bacillus licheniformis (strain ATCC 14580 / DSM 13 / JCM 2505 / CCUG 7422 / NBRC 12200 / NCIMB 9375 / NCTC 10341 / NRRL NRS-1264 / Gibson 46).